A 297-amino-acid polypeptide reads, in one-letter code: Formylmethanofuran--tetrahydromethanopterin formyltransferase (297 aa).

The protein belongs to the FTR family. Homotetramer.

The protein resides in the cytoplasm. It carries out the reaction N-formylmethanofuran + 5,6,7,8-tetrahydromethanopterin + H(+) = N(5)-formyl-5,6,7,8-tetrahydromethanopterin + methanofuran. The protein operates within metabolic intermediate metabolism; lactate oxidation. In terms of biological role, catalyzes the transfer of a formyl group from 5-formyl tetrahydromethanopterin (5-formyl-H(4)MPT) to methanofuran (MFR) to produce formylmethanofuran (formyl-MFR) and tetrahydromethanopterin (H(4)MPT). The protein is Formylmethanofuran--tetrahydromethanopterin formyltransferase of Archaeoglobus fulgidus (strain ATCC 49558 / DSM 4304 / JCM 9628 / NBRC 100126 / VC-16).